A 438-amino-acid polypeptide reads, in one-letter code: sn-glycerol-3-phosphate-binding periplasmic protein UgpB (438 aa).

Positions 1–23 (MISLRHTALGLALSLAFTGQALA) are cleaved as a signal peptide. Positions 65, 89, 144, 270, 307, 346, and 397 each coordinate sn-glycerol 3-phosphate.

Belongs to the bacterial solute-binding protein 1 family. The complex is composed of two ATP-binding proteins (UgpC), two transmembrane proteins (UgpA and UgpE) and a solute-binding protein (UgpB).

It localises to the periplasm. Functionally, part of the ABC transporter complex UgpBAEC involved in sn-glycerol-3-phosphate (G3P) import. Binds G3P. This is sn-glycerol-3-phosphate-binding periplasmic protein UgpB (ugpB) from Salmonella paratyphi A (strain ATCC 9150 / SARB42).